The following is a 185-amino-acid chain: CASP-like protein 2C2 (185 aa).

The Cytoplasmic segment spans residues 1–22 (MAAAARVSEVKAEGLLRGACTA). A helical membrane pass occupies residues 23-43 (LAAAAALLVGLSTQTETVLLV). Residues 44–53 (RKKATVKDVQ) lie on the Extracellular side of the membrane. A helical membrane pass occupies residues 54–74 (ALWVLAMAAAAAAGYHLLQLL). The Cytoplasmic portion of the chain corresponds to 75–104 (KCLYLGRVGGARPCRRSSRALAWTCLLLDK). A helical transmembrane segment spans residues 105 to 125 (ACAYTTFATTVAAAQACVVAL). At 126–146 (DGAHALQWTKLCNIYTRFCEQ) the chain is on the extracellular side. Residues 147 to 167 (VAGSLVLGMLAAVGTAVLSAA) form a helical membrane-spanning segment. Topologically, residues 168 to 185 (SARNVFRHYASLETYAAH) are cytoplasmic.

This sequence belongs to the Casparian strip membrane proteins (CASP) family. As to quaternary structure, homodimer and heterodimers.

It localises to the cell membrane. In Zea mays (Maize), this protein is CASP-like protein 2C2.